The primary structure comprises 470 residues: Na(+)/H(+) antiporter NhaA 2 (470 aa).

The next 11 membrane-spanning stretches (helical) occupy residues 34–54, 85–105, 121–141, 150–170, 179–199, 202–222, 241–261, 317–337, 357–377, 395–415, and 423–443; these read FLHI…IALL, LEWV…GMEI, ALPA…YLLL, GWGV…TLLG, VLLL…IAVF, SGVA…VFAM, WAGV…IGLI, SLIA…FALA, LATA…ACWL, LLVL…IAQL, and LAAG…VALV.

The protein belongs to the NhaA Na(+)/H(+) (TC 2.A.33) antiporter family.

The protein resides in the cell inner membrane. It catalyses the reaction Na(+)(in) + 2 H(+)(out) = Na(+)(out) + 2 H(+)(in). Functionally, na(+)/H(+) antiporter that extrudes sodium in exchange for external protons. In Myxococcus xanthus (strain DK1622), this protein is Na(+)/H(+) antiporter NhaA 2.